Reading from the N-terminus, the 169-residue chain is Peptide methionine sulfoxide reductase MsrA (169 aa).

The active site involves Cys10.

The protein belongs to the MsrA Met sulfoxide reductase family.

The enzyme catalyses L-methionyl-[protein] + [thioredoxin]-disulfide + H2O = L-methionyl-(S)-S-oxide-[protein] + [thioredoxin]-dithiol. It catalyses the reaction [thioredoxin]-disulfide + L-methionine + H2O = L-methionine (S)-S-oxide + [thioredoxin]-dithiol. Functionally, has an important function as a repair enzyme for proteins that have been inactivated by oxidation. Catalyzes the reversible oxidation-reduction of methionine sulfoxide in proteins to methionine. The chain is Peptide methionine sulfoxide reductase MsrA from Streptococcus uberis (strain ATCC BAA-854 / 0140J).